Consider the following 325-residue polypeptide: Centromere protein O (325 aa).

The interval 1-35 (MEEERNSDEKENALCGRSLTAASRDGGGRMPAAPL) is disordered. The stretch at 55–112 (LEMLEAQAHELGLKQEEKEQQEKKLDRLKARVQELRARRDELRAKVELQEKRLLDKEG) forms a coiled coil.

This sequence belongs to the CENP-O/MCM21 family. In terms of assembly, component of the CENPA-HI complex, at least composed of CENPH, CENPI, CENPK, CENPL, CENPM, CENPO and CENPP. Component of a discrete complex composed of at least CENPO, CENPP, CENPQ, CENPR and CENPU.

The protein localises to the nucleus. It localises to the chromosome. The protein resides in the centromere. Component of the CENPA-HI complex, a centromeric complex involved in assembly of kinetochore proteins, mitotic progression and chromosome segregation. Involved in kinetochore assembly and required for recovery from spindle damage. The sequence is that of Centromere protein O (CENPO) from Gallus gallus (Chicken).